We begin with the raw amino-acid sequence, 92 residues long: UPF0223 protein SMU_1141c (92 aa).

The protein belongs to the UPF0223 family.

In Streptococcus mutans serotype c (strain ATCC 700610 / UA159), this protein is UPF0223 protein SMU_1141c.